The sequence spans 455 residues: Argininosuccinate synthase (455 aa).

ATP-binding positions include 17 to 25 (AFSGGLDTS) and alanine 43. Position 99 (tyrosine 99) interacts with L-citrulline. Residues glycine 129 and threonine 131 each coordinate ATP. The L-aspartate site is built by threonine 131, asparagine 135, and aspartate 136. Residue asparagine 135 participates in L-citrulline binding. Position 136 (aspartate 136) interacts with ATP. Positions 139 and 192 each coordinate L-citrulline. Residue aspartate 194 coordinates ATP. L-citrulline-binding residues include threonine 201, glutamate 203, and glutamate 280. The span at 434–448 (TGLPQVDNNNLSSGR) shows a compositional bias: polar residues. The tract at residues 434-455 (TGLPQVDNNNLSSGRGLQDKRQ) is disordered.

It belongs to the argininosuccinate synthase family. Type 2 subfamily. Homotetramer.

The protein resides in the cytoplasm. The enzyme catalyses L-citrulline + L-aspartate + ATP = 2-(N(omega)-L-arginino)succinate + AMP + diphosphate + H(+). It functions in the pathway amino-acid biosynthesis; L-arginine biosynthesis; L-arginine from L-ornithine and carbamoyl phosphate: step 2/3. This Yersinia pestis protein is Argininosuccinate synthase (argG).